A 132-amino-acid polypeptide reads, in one-letter code: MSTAFAAAVVKQKVEAPISPMDARIDELTDYIMKTLLWQFHSRSWDRERQNAEILKKTKELLCGEPVDLSTSHDRCYWVDAVCLADDYREHYPWINSMSKEEIGSLMQGLKDRMDYLTIHRLLNEELSDKHY.

As to quaternary structure, hexamer of two alpha, two beta, and two delta chains. Iron-sulfur cluster is required as a cofactor.

It catalyses the reaction N2 + 8 reduced [2Fe-2S]-[ferredoxin] + 16 ATP + 16 H2O = H2 + 8 oxidized [2Fe-2S]-[ferredoxin] + 2 NH4(+) + 16 ADP + 16 phosphate + 6 H(+). Its function is as follows. The key enzymatic reactions in nitrogen fixation are catalyzed by the nitrogenase complex, which has 2 components: the iron protein (component 2) and a component 1 which is either a molybdenum-iron protein, a vanadium-iron, or an iron-iron protein. The protein is Nitrogenase iron-iron protein delta chain (anfG) of Ruminiclostridium hungatei (Clostridium hungatei).